Reading from the N-terminus, the 163-residue chain is Neurotrophin-3 (163 aa).

A signal peptide spans 1 to 3 (IQS). Residues 4–119 (TSMDQGILTE…VLNRTSRRKR (116 aa)) constitute a propeptide that is removed on maturation. Residue N112 is glycosylated (N-linked (GlcNAc...) asparagine).

It belongs to the NGF-beta family.

The protein resides in the secreted. Seems to promote the survival of visceral and proprioceptive sensory neurons. In Eryx conicus (Rough-scaled sand boa), this protein is Neurotrophin-3 (NTF3).